The sequence spans 505 residues: MTPGALLLLLLGVLGAHLAPGARGSEAEGRLREKLFSGYDSTVRPAREVGDRVWVSIGLTLAQLISLNEKDEEMSTKVYLDLEWTDYRLSWDPEEHEGIDSLRISAESVWLPDVVLLNNNDGNFDVALDINVVVSSDGSMRWQPPGIYRSSCSIQVTYFPFDWQNCTMVFSSYSYDSSEVSLQTGLSPEGQERQEVYIHEGTFIENGQWEIIHKPSRLIQPSVDPRGGGEGRREEVTFYLIIRRKPLFYLVNVIAPCILITLLAIFVFYLPPDAGEKMGLSIFALLTLTVFLLLLADKVPETSLSVPIIIKYLMFTMVLVTFSVILSVVVLNLHHRSPHTHQMPLWVRQIFIHKLPLYLGLKRPKPERDQMQEPPSIAPRDSPGSGWGRGTDEYFIRKPPNDFLFPKPNRFQPELSAPDLRRFIDGPNRAVGLPPELREVVSSISYIARQLQEQEDHDVLKEDWQFVAMVVDRLFLWTFIIFTSVGTLVIFLDATYHLPPADPFP.

Positions 1–24 (MTPGALLLLLLGVLGAHLAPGARG) are cleaved as a signal peptide. The Extracellular segment spans residues 25 to 245 (SEAEGRLREK…VTFYLIIRRK (221 aa)). C152 and C166 are oxidised to a cystine. N-linked (GlcNAc...) asparagine glycosylation occurs at N165. A run of 3 helical transmembrane segments spans residues 246–270 (PLFY…VFYL), 278–295 (MGLS…LLLL), and 312–333 (YLMF…VLNL). Residues 334 to 473 (HHRSPHTHQM…WQFVAMVVDR (140 aa)) lie on the Cytoplasmic side of the membrane. Residues 365–391 (KPERDQMQEPPSIAPRDSPGSGWGRGT) form a disordered region. Position 394 is a phosphotyrosine; by Tyr-kinases (Y394). The helical transmembrane segment at 474 to 492 (LFLWTFIIFTSVGTLVIFL) threads the bilayer.

The protein belongs to the ligand-gated ion channel (TC 1.A.9) family. Acetylcholine receptor (TC 1.A.9.1) subfamily. Beta-1/CHRNB1 sub-subfamily. Pentamer of two alpha chains, and one each of the beta, delta, and gamma (in immature muscle) or epsilon (in mature muscle) chains. The muscle heteropentamer composed of alpha-1, beta-1, delta, epsilon subunits interacts with the alpha-conotoxin ImII.

It localises to the postsynaptic cell membrane. The protein resides in the cell membrane. It catalyses the reaction K(+)(in) = K(+)(out). The enzyme catalyses Na(+)(in) = Na(+)(out). Its function is as follows. After binding acetylcholine, the AChR responds by an extensive change in conformation that affects all subunits and leads to opening of an ion-conducting channel across the plasma membrane. The polypeptide is Acetylcholine receptor subunit beta (CHRNB1) (Bos taurus (Bovine)).